The sequence spans 415 residues: Fructose-like permease IIC component (415 aa).

Over 1 to 46 (MAIKKRSATVVPGASGAAAAVKNLQASKSSFWGELPQHVMSGISRM) the chain is Cytoplasmic. A PTS EIIC type-2 domain is found at 35 to 415 (LPQHVMSGIS…RKGKLLIDSL (381 aa)). A helical membrane pass occupies residues 47 to 67 (VPTLIMGGVILAFSQLIAYSW). The Periplasmic segment spans residues 68-101 (LKIPAEIGIMDALNSGKFSGFDLSLLKFAWLSQS). The helical transmembrane segment at 102–122 (FGGVLFGFAIPMFAAFVANSI) threads the bilayer. The Cytoplasmic portion of the chain corresponds to 123 to 126 (GGKL). Residues 127–147 (AFPAGFIGGLMSTQPTQLLNF) traverse the membrane as a helical segment. Residues 148-157 (DPSTMQWATS) are Periplasmic-facing. Residues 158-178 (SPVPSTFIGALIISIVAGYLV) traverse the membrane as a helical segment. At 179–197 (KWMNQKIQLPDFLLAFKTT) the chain is on the cytoplasmic side. Residues 198–218 (FLLPILSAIFVMLAMYYVITP) form a helical membrane-spanning segment. Residues 219–237 (FGGWINGGIRTVLTAAGEK) are Periplasmic-facing. The chain crosses the membrane as a helical span at residues 238 to 258 (GALMYAMGIAAATAIDLGGPI). The Cytoplasmic segment spans residues 259 to 276 (NKAAGFVAFSFTTDHVLP). Residues 277–297 (VTARSIAIVIPPIGLGLATII) traverse the membrane as a helical segment. Topologically, residues 298-318 (DRRLTGKRLFNAQLYPQGKTA) are periplasmic. Residues 319–339 (MFLAFMGISEGAIPFALESPI) traverse the membrane as a helical segment. The Cytoplasmic portion of the chain corresponds to 340-341 (TA). Residues 342 to 362 (IPSYMVGAIVGSTAAVWLGAV) traverse the membrane as a helical segment. Residues 363–378 (QWFPESAIWAWPLVTN) are Periplasmic-facing. Residues 379-399 (LGVYMAGIALGAIITALMVVF) form a helical membrane-spanning segment. At 400-415 (LRLMMFRKGKLLIDSL) the chain is on the cytoplasmic side.

The protein localises to the cell inner membrane. Its function is as follows. The phosphoenolpyruvate-dependent sugar phosphotransferase system (PTS), a major carbohydrate active -transport system, catalyzes the phosphorylation of incoming sugar substrates concomitant with their translocation across the cell membrane. The chain is Fructose-like permease IIC component (fryC) from Shigella flexneri.